The following is a 397-amino-acid chain: ATP-dependent RNA helicase RhlB (397 aa).

Positions 9–37 (TRFHDFNLAPSLMHAIHDLGFPYCTPIQA) match the Q motif motif. Residues 40–220 (LGFTLRGQDA…KQWTVDPAIV (181 aa)) enclose the Helicase ATP-binding domain. 53–60 (AQTGTGKT) is an ATP binding site. The short motif at 166–169 (DEAD) is the DEAD box element. The region spanning 243–393 (DKYKLLYNLV…MPPAELLKPV (151 aa)) is the Helicase C-terminal domain.

Belongs to the DEAD box helicase family. RhlB subfamily. Component of the RNA degradosome, which is a multiprotein complex involved in RNA processing and mRNA degradation.

Its subcellular location is the cytoplasm. The enzyme catalyses ATP + H2O = ADP + phosphate + H(+). Its function is as follows. DEAD-box RNA helicase involved in RNA degradation. Has RNA-dependent ATPase activity and unwinds double-stranded RNA. This is ATP-dependent RNA helicase RhlB from Pseudomonas aeruginosa (strain UCBPP-PA14).